We begin with the raw amino-acid sequence, 253 residues long: Imidazole glycerol phosphate synthase subunit HisF (253 aa).

Catalysis depends on residues aspartate 11 and aspartate 130.

This sequence belongs to the HisA/HisF family. Heterodimer of HisH and HisF.

The protein resides in the cytoplasm. The enzyme catalyses 5-[(5-phospho-1-deoxy-D-ribulos-1-ylimino)methylamino]-1-(5-phospho-beta-D-ribosyl)imidazole-4-carboxamide + L-glutamine = D-erythro-1-(imidazol-4-yl)glycerol 3-phosphate + 5-amino-1-(5-phospho-beta-D-ribosyl)imidazole-4-carboxamide + L-glutamate + H(+). It functions in the pathway amino-acid biosynthesis; L-histidine biosynthesis; L-histidine from 5-phospho-alpha-D-ribose 1-diphosphate: step 5/9. Its function is as follows. IGPS catalyzes the conversion of PRFAR and glutamine to IGP, AICAR and glutamate. The HisF subunit catalyzes the cyclization activity that produces IGP and AICAR from PRFAR using the ammonia provided by the HisH subunit. The chain is Imidazole glycerol phosphate synthase subunit HisF from Geotalea daltonii (strain DSM 22248 / JCM 15807 / FRC-32) (Geobacter daltonii).